Here is a 407-residue protein sequence, read N- to C-terminus: uncharacterized protein (407 aa).

The tract at residues 145 to 231 (EANRFGRSNS…DPLTSITSDT (87 aa)) is disordered. Residues 158–175 (SNSRSKSSRSRSNNRSKS) show a composition bias toward basic residues. Low complexity predominate over residues 176–196 (SRSSSTQSKSNNRSNSRSNSK). In terms of domain architecture, N-acetyltransferase spans 271 to 407 (IVFETLDQND…NHKIHMEKDI (137 aa)).

It localises to the virion. This is an uncharacterized protein from Acanthamoeba polyphaga (Amoeba).